The primary structure comprises 582 residues: uncharacterized protein (582 aa).

6 consecutive transmembrane segments (helical) span residues 17–37 (VAML…LPTV), 57–77 (LGAV…GAVY), 131–151 (MTAT…IMAI), 156–176 (ALTW…YWII), 239–259 (ALML…LIWF), and 271–291 (VGSL…VLMA). The ABC transmembrane type-1 domain occupies 17–300 (VAMLMMLQLV…ATMTLAVLPR (284 aa)). The ABC transporter domain occupies 335–571 (VRLAGATFTY…CPTYAEFAAS (237 aa)). An ATP-binding site is contributed by 369–376 (GSTGSGKS).

This sequence belongs to the ABC transporter superfamily. MsbA family.

It is found in the cell membrane. This is an uncharacterized protein from Mycobacterium bovis (strain ATCC BAA-935 / AF2122/97).